We begin with the raw amino-acid sequence, 278 residues long: UPF0276 protein Shew_2240 (278 aa).

The protein belongs to the UPF0276 family.

The sequence is that of UPF0276 protein Shew_2240 from Shewanella loihica (strain ATCC BAA-1088 / PV-4).